Here is a 142-residue protein sequence, read N- to C-terminus: Virulence-associated membrane protein 1 (142 aa).

The first 20 residues, 1–20 (MRGILVALTAALIFCSLTPA), serve as a signal peptide directing secretion. A helical membrane pass occupies residues 59–79 (IAIAVGTALVTLVSAGVGGML).

In terms of assembly, monomer.

Its subcellular location is the membrane. During infection, may play a role in establishing and maintaining biotrophy; the formation of a tight interaction zone between the host and the pathogen. This is Virulence-associated membrane protein 1 from Mycosarcoma maydis (Corn smut fungus).